The sequence spans 415 residues: Serine hydroxymethyltransferase (415 aa).

(6S)-5,6,7,8-tetrahydrofolate contacts are provided by residues L117 and 121-123; that span reads GHL. K226 is modified (N6-(pyridoxal phosphate)lysine).

The protein belongs to the SHMT family. In terms of assembly, homodimer. The cofactor is pyridoxal 5'-phosphate.

It is found in the cytoplasm. It catalyses the reaction (6R)-5,10-methylene-5,6,7,8-tetrahydrofolate + glycine + H2O = (6S)-5,6,7,8-tetrahydrofolate + L-serine. The protein operates within one-carbon metabolism; tetrahydrofolate interconversion. It functions in the pathway amino-acid biosynthesis; glycine biosynthesis; glycine from L-serine: step 1/1. Catalyzes the reversible interconversion of serine and glycine with tetrahydrofolate (THF) serving as the one-carbon carrier. This reaction serves as the major source of one-carbon groups required for the biosynthesis of purines, thymidylate, methionine, and other important biomolecules. Also exhibits THF-independent aldolase activity toward beta-hydroxyamino acids, producing glycine and aldehydes, via a retro-aldol mechanism. This chain is Serine hydroxymethyltransferase, found in Leptospira interrogans serogroup Icterohaemorrhagiae serovar copenhageni (strain Fiocruz L1-130).